Reading from the N-terminus, the 456-residue chain is Putative F-box/LRR-repeat protein At5g02700 (456 aa).

Positions 26-72 (ADFINYMPDDILHHILSFIPTDLAMRTSVLSRRWRHVWCETPCLDIT) constitute an F-box domain. 5 LRR repeats span residues 126–154 (VRDF…DVTL), 177–202 (FCQI…TLDT), 206–224 (LERL…DINQ), 271–300 (LSPL…TVGE), and 330–355 (FVRS…RPST).

This chain is Putative F-box/LRR-repeat protein At5g02700, found in Arabidopsis thaliana (Mouse-ear cress).